The following is a 118-amino-acid chain: Hydrogenase maturation factor HypA (118 aa).

Position 2 (histidine 2) interacts with Ni(2+). 4 residues coordinate Zn(2+): cysteine 73, cysteine 76, cysteine 89, and cysteine 92.

The protein belongs to the HypA/HybF family.

Its function is as follows. Involved in the maturation of [NiFe] hydrogenases. Required for nickel insertion into the metal center of the hydrogenase. The chain is Hydrogenase maturation factor HypA from Shewanella sp. (strain MR-7).